A 241-amino-acid polypeptide reads, in one-letter code: Triosephosphate isomerase (241 aa).

Substrate is bound at residue 9 to 11 (NWK). The Electrophile role is filled by H96. E165 serves as the catalytic Proton acceptor. Residues G171, S204, and 225–226 (GG) contribute to the substrate site.

The protein belongs to the triosephosphate isomerase family. In terms of assembly, homodimer.

The protein localises to the cytoplasm. It catalyses the reaction D-glyceraldehyde 3-phosphate = dihydroxyacetone phosphate. It participates in carbohydrate biosynthesis; gluconeogenesis. It functions in the pathway carbohydrate degradation; glycolysis; D-glyceraldehyde 3-phosphate from glycerone phosphate: step 1/1. Involved in the gluconeogenesis. Catalyzes stereospecifically the conversion of dihydroxyacetone phosphate (DHAP) to D-glyceraldehyde-3-phosphate (G3P). The chain is Triosephosphate isomerase from Prochlorococcus marinus (strain MIT 9515).